The following is an 856-amino-acid chain: Histone-lysine N-methyltransferase EZA1 (856 aa).

Residues 1–11 (MVTDDSNSSGR) are compositionally biased toward polar residues. Disordered stretches follow at residues 1–34 (MVTD…GLEN), 66–87 (VSPF…NSNM), and 366–473 (NVDS…HHGS). Residues 17–28 (DDDDDGEEEEDR) are compositionally biased toward acidic residues. Residues 22-49 (GEEEEDRLEGLENRLSELKRKIQGERVR) are a coiled coil. Residues 68-87 (PFSSAASSRATAEDNGNSNM) are compositionally biased toward polar residues. Positions 374–392 (EQEHGIRGKREVPILKDSN) are enriched in basic and acidic residues. Positions 393-419 (DLPNLSNKKQKTAASDTKMSFVNSVPS) are enriched in polar residues. Residues 438-451 (KVNRDSEADAKEVG) are compositionally biased toward basic and acidic residues. An SANT domain is found at 489-539 (PSTEWNPIEKDLYLKGVEIFGRNSCLIARNLLSGLKTCLDVSNYMRENEVS). In terms of domain architecture, CXC spans 594–693 (WKRIAGGKNQ…SLGEAPRRGE (100 aa)). The SET domain maps to 707 to 822 (QRILLGKSDV…ASEELFYDYR (116 aa)). Tyr-821 provides a ligand contact to S-adenosyl-L-methionine. A disordered region spans residues 827–856 (QAPVWARKPEGSKKDDSAITHRRARKHQSH). Over residues 833 to 845 (RKPEGSKKDDSAI) the composition is skewed to basic and acidic residues. The Nuclear localization signal signature appears at 838-845 (SKKDDSAI). Residues 846-856 (THRRARKHQSH) are compositionally biased toward basic residues.

The protein belongs to the class V-like SAM-binding methyltransferase superfamily. Histone-lysine methyltransferase family. EZ subfamily. In terms of assembly, component of the plant homeodomain / polycomb repressive complex 2 (PHD-PRC2) large complex during prolonged cold, composed of core PRC2 components (VRN2, EZA1, FIE and MSI1), and three related PHD finger proteins (VIL1, VIL2 and VIN3) that mediates histone H3 trimethylation on 'Lys-27' H3K27me3. Interacts with TAF13. Interacts with EOL1. Interacts (via SANT domain) with HXK1 in the nucleus.

Its subcellular location is the nucleus. It carries out the reaction L-lysyl(27)-[histone H3] + 3 S-adenosyl-L-methionine = N(6),N(6),N(6)-trimethyl-L-lysyl(27)-[histone H3] + 3 S-adenosyl-L-homocysteine + 3 H(+). In terms of biological role, polycomb group (PcG) protein. Catalytic subunit of some PcG multiprotein complex, which methylates 'Lys-27' of histone H3, leading to transcriptional repression of the affected target genes, mainly abscisic acid (ABA) responsive elements. PcG proteins act by forming multiprotein complexes, which are required to maintain the transcriptionally repressive state of homeotic genes throughout development. PcG proteins are not required to initiate repression, but to maintain it during later stages of development. Forms a nuclear complex with CLF and HXK1 to target common glucose-responsive genes and regulate glucose signaling by glucose-mediated gene repression. Affects the recruitment of HXK1 to the target chromatin. The protein is Histone-lysine N-methyltransferase EZA1 of Arabidopsis thaliana (Mouse-ear cress).